We begin with the raw amino-acid sequence, 176 residues long: Adenine phosphoribosyltransferase (176 aa).

It belongs to the purine/pyrimidine phosphoribosyltransferase family. Homodimer.

It is found in the cytoplasm. It carries out the reaction AMP + diphosphate = 5-phospho-alpha-D-ribose 1-diphosphate + adenine. It participates in purine metabolism; AMP biosynthesis via salvage pathway; AMP from adenine: step 1/1. Functionally, catalyzes a salvage reaction resulting in the formation of AMP, that is energically less costly than de novo synthesis. This chain is Adenine phosphoribosyltransferase, found in Gluconacetobacter diazotrophicus (strain ATCC 49037 / DSM 5601 / CCUG 37298 / CIP 103539 / LMG 7603 / PAl5).